Consider the following 435-residue polypeptide: Ribosomal protein uS12 methylthiotransferase RimO (435 aa).

Residues 2 to 118 form the MTTase N-terminal domain; it reads KKFHIVKLGC…IVEKIENGEY (117 aa). [4Fe-4S] cluster-binding residues include Cys-11, Cys-47, Cys-81, Cys-150, Cys-154, and Cys-157. Residues 136-364 enclose the Radical SAM core domain; the sequence is IPDSHYAYVK…MTVQSEISKN (229 aa). Residues 367 to 435 enclose the TRAM domain; the sequence is EKYIGETLEV…EYDLEGEIVE (69 aa).

The protein belongs to the methylthiotransferase family. RimO subfamily. The cofactor is [4Fe-4S] cluster.

The protein resides in the cytoplasm. The enzyme catalyses L-aspartate(89)-[ribosomal protein uS12]-hydrogen + (sulfur carrier)-SH + AH2 + 2 S-adenosyl-L-methionine = 3-methylsulfanyl-L-aspartate(89)-[ribosomal protein uS12]-hydrogen + (sulfur carrier)-H + 5'-deoxyadenosine + L-methionine + A + S-adenosyl-L-homocysteine + 2 H(+). Catalyzes the methylthiolation of an aspartic acid residue of ribosomal protein uS12. The polypeptide is Ribosomal protein uS12 methylthiotransferase RimO (Petrotoga mobilis (strain DSM 10674 / SJ95)).